The primary structure comprises 84 residues: UPF0153 protein PA1578.1 (84 aa).

It belongs to the UPF0153 family.

This is UPF0153 protein PA1578.1 from Pseudomonas aeruginosa (strain ATCC 15692 / DSM 22644 / CIP 104116 / JCM 14847 / LMG 12228 / 1C / PRS 101 / PAO1).